The sequence spans 2451 residues: Reducing polyketide synthase 8 (2451 aa).

One can recognise a Ketosynthase family 3 (KS3) domain in the interval 12-434 (NEPIAIVGSS…GTNAHAILEA (423 aa)). Catalysis depends on for beta-ketoacyl synthase activity residues cysteine 174, histidine 313, and histidine 354. Residues 538–846 (VFTGQGAQWA…GPATETINNM (309 aa)) enclose the Malonyl-CoA:ACP transacylase (MAT) domain. The segment at 940–1085 (HQLLGSASTF…GFLRIELGAP (146 aa)) is N-terminal hotdog fold. One can recognise a PKS/mFAS DH domain in the interval 940 to 1254 (HQLLGSASTF…LLNLPGSLRS (315 aa)). The active-site Proton acceptor; for dehydratase activity is histidine 974. The C-terminal hotdog fold stretch occupies residues 1100–1254 (LIPLDVEELY…LLNLPGSLRS (155 aa)). Aspartate 1160 functions as the Proton donor; for dehydratase activity in the catalytic mechanism. A methyltransfrase (MT) domain region spans residues 1294 to 1590 (LVLFYCQKVL…QHFCSVMLSQ (297 aa)). In terms of domain architecture, Ketoreductase (KR) spans 2088-2266 (TYLLLGLAGD…PGCVVHIGGV (179 aa)). Residues 2366 to 2451 (DACLDLLLGG…LAIWRKQVKA (86 aa)) enclose the Carrier domain. Serine 2404 bears the O-(pantetheine 4'-phosphoryl)serine mark.

Pantetheine 4'-phosphate serves as cofactor.

It functions in the pathway secondary metabolite biosynthesis. In terms of biological role, reducing polyketide synthase; part of the gene cluster that mediates the biosynthesis of fusamarins, isocoumarin derivatives that show moderate cytotoxicity with IC(50) values between 1 and 50 uM. The polyketide synthase FMN1 probably synthesizes two different polyketides, a tetra- and a pentaketide, containinga varying number of double bonds depending on the selective actions of the trans-enoyl reductase FMN2. Chain fusion will presumably be mediated by the KS domain before finally offloading is catalyzed by the alpha/beta hydrolase fold enzyme FMN3. This chain is Reducing polyketide synthase 8, found in Fusarium mangiferae (Mango malformation disease fungus).